The primary structure comprises 130 residues: Cystatin (130 aa).

The signal sequence occupies residues 1–19 (MEWKIVVPLLAVAFTVANA). The short motif at 67–71 (QVVSG) is the Secondary area of contact element. Cystine bridges form between Cys85–Cys94 and Cys108–Cys128.

Belongs to the cystatin family. In terms of tissue distribution, ubiquitous expression including brain, white muscle, heart, gill, kidney, spleen, liver and skin with the highest and lowest level in brain and gill, respectively.

Its subcellular location is the secreted. Functionally, cysteine proteinase inhibitor. The protein is Cystatin of Oncorhynchus keta (Chum salmon).